Reading from the N-terminus, the 1004-residue chain is Kinesin-like protein KIN-14R (1004 aa).

Disordered regions lie at residues 1–21, 61–90, and 110–169; these read MEEE…RIGD, PYVD…MQHD, and ELFS…ATMG. Acidic residues predominate over residues 63–75; that stretch reads VDDDDDGNSEEEN. Pro residues predominate over residues 115 to 125; it reads PSPPQGPPSPS. Coiled-coil stretches lie at residues 189–230 and 266–338; these read CGQL…AQAS and LNDL…LYNK. In terms of domain architecture, Kinesin motor spans 345-671; that stretch reads NIRVFCRCRP…LNFASRVRGI (327 aa). An ATP-binding site is contributed by 428 to 435; sequence GQTGTGKT. Residues 691–742 are a coiled coil; that stretch reads MAGRAKQDSKNKDAQIKSMEETIQSLEAKNKAKDLLTMNLQEKIKELEAQLL. Disordered regions lie at residues 759-791 and 946-1004; these read DHLH…STAE and SGRR…RQLN. Residues 948–958 show a composition bias toward low complexity; sequence RRAGAGVAGTT. Residues 995–1004 are compositionally biased toward polar residues; sequence NNGTSLRQLN.

It belongs to the TRAFAC class myosin-kinesin ATPase superfamily. Kinesin family. KIN-14 subfamily.

The protein is Kinesin-like protein KIN-14R of Oryza sativa subsp. japonica (Rice).